The chain runs to 261 residues: Urease accessory protein UreD (261 aa).

The protein belongs to the UreD family. As to quaternary structure, ureD, UreF and UreG form a complex that acts as a GTP-hydrolysis-dependent molecular chaperone, activating the urease apoprotein by helping to assemble the nickel containing metallocenter of UreC. The UreE protein probably delivers the nickel.

The protein resides in the cytoplasm. In terms of biological role, required for maturation of urease via the functional incorporation of the urease nickel metallocenter. In Haemophilus influenzae (strain ATCC 51907 / DSM 11121 / KW20 / Rd), this protein is Urease accessory protein UreD.